The chain runs to 577 residues: Lysine-specific demethylase 7B (577 aa).

The PHD-type zinc finger occupies 5-56 (QLYCVCRQPYDVSRFMIECDICKDWFHGSCVEVEEHYAVDIDVYHCPNCDVH). One can recognise a JmjC domain in the interval 198-354 (FSDTKMAELV…MQLRCYEMER (157 aa)). Position 247 (T247) interacts with substrate. Residues H250 and D252 each contribute to the Fe cation site. K267 contacts substrate. H322 contributes to the Fe cation binding site. The segment at 460-513 (CPSTRSAHERGSHARKTARRLRGHHHHHHRHHHHHHHHHHHNHQHSDGPKAPSH) is disordered. The segment covering 472 to 502 (HARKTARRLRGHHHHHHRHHHHHHHHHHHNH) has biased composition (basic residues).

This sequence belongs to the JHDM1 histone demethylase family. JHDM1D subfamily. Fe(2+) is required as a cofactor. As to expression, predominantly expressed in brain.

Its subcellular location is the nucleus. In terms of biological role, histone demethylase required for brain development. Specifically demethylates dimethylated 'Lys-9' and 'Lys-27' (H3K9me2 and H3K27me2, respectively) of histone H3 and monomethylated histone H4 'Lys-20' residue (H4K20Me1), thereby playing a central role in histone code. This chain is Lysine-specific demethylase 7B (jhdm1db), found in Danio rerio (Zebrafish).